A 394-amino-acid chain; its full sequence is Aromatic-amino-acid aminotransferase (394 aa).

Residues Gly34, Tyr65, Trp127, and Asn180 each coordinate substrate. Lys243 bears the N6-(pyridoxal phosphate)lysine mark. Position 371 (Arg371) interacts with substrate.

It belongs to the class-I pyridoxal-phosphate-dependent aminotransferase family. As to quaternary structure, homodimer. Pyridoxal 5'-phosphate is required as a cofactor.

The protein localises to the cytoplasm. It carries out the reaction an aromatic L-alpha-amino acid + 2-oxoglutarate = an aromatic oxo-acid + L-glutamate. In terms of biological role, shows activities toward both dicarboxylic and aromatic substrates. The sequence is that of Aromatic-amino-acid aminotransferase (tyrB) from Paracoccus denitrificans.